A 264-amino-acid chain; its full sequence is 3-deoxy-manno-octulosonate cytidylyltransferase (264 aa).

The protein belongs to the KdsB family.

The protein localises to the cytoplasm. The enzyme catalyses 3-deoxy-alpha-D-manno-oct-2-ulosonate + CTP = CMP-3-deoxy-beta-D-manno-octulosonate + diphosphate. Its pathway is nucleotide-sugar biosynthesis; CMP-3-deoxy-D-manno-octulosonate biosynthesis; CMP-3-deoxy-D-manno-octulosonate from 3-deoxy-D-manno-octulosonate and CTP: step 1/1. It functions in the pathway bacterial outer membrane biogenesis; lipopolysaccharide biosynthesis. Activates KDO (a required 8-carbon sugar) for incorporation into bacterial lipopolysaccharide in Gram-negative bacteria. This is 3-deoxy-manno-octulosonate cytidylyltransferase from Methylibium petroleiphilum (strain ATCC BAA-1232 / LMG 22953 / PM1).